The following is a 355-amino-acid chain: Holliday junction branch migration complex subunit RuvB (355 aa).

The large ATPase domain (RuvB-L) stretch occupies residues 4 to 190; it reads TDKLAAERII…FGIVARLEFY (187 aa). ATP contacts are provided by residues Leu29, Arg30, Gly71, Lys74, Thr75, Thr76, 137 to 139, Arg180, Tyr190, and Arg227; that span reads EDY. Position 75 (Thr75) interacts with Mg(2+). The small ATPAse domain (RuvB-S) stretch occupies residues 191-261; sequence DAEQLSRIVR…VADAALAMLD (71 aa). Positions 264 to 355 are head domain (RuvB-H); the sequence is PVGFDLMDRK…GSMWNTPDGA (92 aa). The DNA site is built by Arg300, Arg319, and Arg324.

Belongs to the RuvB family. In terms of assembly, homohexamer. Forms an RuvA(8)-RuvB(12)-Holliday junction (HJ) complex. HJ DNA is sandwiched between 2 RuvA tetramers; dsDNA enters through RuvA and exits via RuvB. An RuvB hexamer assembles on each DNA strand where it exits the tetramer. Each RuvB hexamer is contacted by two RuvA subunits (via domain III) on 2 adjacent RuvB subunits; this complex drives branch migration. In the full resolvosome a probable DNA-RuvA(4)-RuvB(12)-RuvC(2) complex forms which resolves the HJ.

The protein localises to the cytoplasm. The catalysed reaction is ATP + H2O = ADP + phosphate + H(+). The RuvA-RuvB-RuvC complex processes Holliday junction (HJ) DNA during genetic recombination and DNA repair, while the RuvA-RuvB complex plays an important role in the rescue of blocked DNA replication forks via replication fork reversal (RFR). RuvA specifically binds to HJ cruciform DNA, conferring on it an open structure. The RuvB hexamer acts as an ATP-dependent pump, pulling dsDNA into and through the RuvAB complex. RuvB forms 2 homohexamers on either side of HJ DNA bound by 1 or 2 RuvA tetramers; 4 subunits per hexamer contact DNA at a time. Coordinated motions by a converter formed by DNA-disengaged RuvB subunits stimulates ATP hydrolysis and nucleotide exchange. Immobilization of the converter enables RuvB to convert the ATP-contained energy into a lever motion, pulling 2 nucleotides of DNA out of the RuvA tetramer per ATP hydrolyzed, thus driving DNA branch migration. The RuvB motors rotate together with the DNA substrate, which together with the progressing nucleotide cycle form the mechanistic basis for DNA recombination by continuous HJ branch migration. Branch migration allows RuvC to scan DNA until it finds its consensus sequence, where it cleaves and resolves cruciform DNA. The sequence is that of Holliday junction branch migration complex subunit RuvB from Burkholderia vietnamiensis (strain G4 / LMG 22486) (Burkholderia cepacia (strain R1808)).